The following is a 251-amino-acid chain: Mast cell protease 3 (251 aa).

Residues 1–17 (MVLFLLLVALLSPAGEA) form the signal peptide. Residues 18–19 (GK) constitute a propeptide, activation peptide. A Peptidase S1 domain is found at 20–243 (IIGGHEAKPH…FLSWIQRTMR (224 aa)). Cysteine 48 and cysteine 64 form a disulfide bridge. Histidine 63 serves as the catalytic Charge relay system. N-linked (GlcNAc...) asparagine glycosylation occurs at asparagine 70. Aspartate 107 (charge relay system) is an active-site residue. Cystine bridges form between cysteine 141–cysteine 207 and cysteine 172–cysteine 186. Serine 201 functions as the Charge relay system in the catalytic mechanism.

This sequence belongs to the peptidase S1 family. Granzyme subfamily.

It localises to the secreted. Its subcellular location is the cytoplasmic granule. This is Mast cell protease 3 from Ovis aries (Sheep).